A 276-amino-acid polypeptide reads, in one-letter code: Ribosomal RNA small subunit methyltransferase J (276 aa).

S-adenosyl-L-methionine contacts are provided by residues E135–R136 and D191.

This sequence belongs to the methyltransferase superfamily. RsmJ family.

The protein localises to the cytoplasm. It catalyses the reaction guanosine(1516) in 16S rRNA + S-adenosyl-L-methionine = N(2)-methylguanosine(1516) in 16S rRNA + S-adenosyl-L-homocysteine + H(+). Specifically methylates the guanosine in position 1516 of 16S rRNA. The polypeptide is Ribosomal RNA small subunit methyltransferase J (Hydrogenovibrio crunogenus (strain DSM 25203 / XCL-2) (Thiomicrospira crunogena)).